Consider the following 200-residue polypeptide: NADH-quinone oxidoreductase subunit C (200 aa).

The protein belongs to the complex I 30 kDa subunit family. In terms of assembly, NDH-1 is composed of 14 different subunits. Subunits NuoB, C, D, E, F, and G constitute the peripheral sector of the complex.

It is found in the cell inner membrane. The catalysed reaction is a quinone + NADH + 5 H(+)(in) = a quinol + NAD(+) + 4 H(+)(out). Functionally, NDH-1 shuttles electrons from NADH, via FMN and iron-sulfur (Fe-S) centers, to quinones in the respiratory chain. The immediate electron acceptor for the enzyme in this species is believed to be ubiquinone. Couples the redox reaction to proton translocation (for every two electrons transferred, four hydrogen ions are translocated across the cytoplasmic membrane), and thus conserves the redox energy in a proton gradient. The sequence is that of NADH-quinone oxidoreductase subunit C from Ralstonia nicotianae (strain ATCC BAA-1114 / GMI1000) (Ralstonia solanacearum).